The primary structure comprises 282 residues: Putative 4-diphosphocytidyl-2-C-methyl-D-erythritol kinase (282 aa).

Lysine 9 is an active-site residue. 93 to 103 (PVSAGLAGGSA) contributes to the ATP binding site. Residue aspartate 135 is part of the active site.

Belongs to the GHMP kinase family. IspE subfamily.

The enzyme catalyses 4-CDP-2-C-methyl-D-erythritol + ATP = 4-CDP-2-C-methyl-D-erythritol 2-phosphate + ADP + H(+). Functionally, catalyzes the phosphorylation of the position 2 hydroxy group of 4-diphosphocytidyl-2C-methyl-D-erythritol. The chain is Putative 4-diphosphocytidyl-2-C-methyl-D-erythritol kinase from Staphylococcus aureus (strain MRSA252).